The following is a 376-amino-acid chain: Transmembrane protein 183A (376 aa).

2 disordered regions span residues methionine 1–lysine 20 and methionine 100–glycine 127. The helical transmembrane segment at leucine 300–valine 320 threads the bilayer.

Belongs to the TMEM183 family.

The protein resides in the membrane. This Homo sapiens (Human) protein is Transmembrane protein 183A (TMEM183A).